Reading from the N-terminus, the 364-residue chain is N-acetyl-gamma-glutamyl-phosphate reductase (364 aa).

C157 is a catalytic residue.

It belongs to the NAGSA dehydrogenase family. Type 1 subfamily.

It is found in the cytoplasm. It catalyses the reaction N-acetyl-L-glutamate 5-semialdehyde + phosphate + NADP(+) = N-acetyl-L-glutamyl 5-phosphate + NADPH + H(+). It functions in the pathway amino-acid biosynthesis; L-arginine biosynthesis; N(2)-acetyl-L-ornithine from L-glutamate: step 3/4. Catalyzes the NADPH-dependent reduction of N-acetyl-5-glutamyl phosphate to yield N-acetyl-L-glutamate 5-semialdehyde. This Bifidobacterium longum (strain NCC 2705) protein is N-acetyl-gamma-glutamyl-phosphate reductase.